The sequence spans 1116 residues: Cation channel sperm-associated auxiliary subunit beta (1116 aa).

At 1–1053 (MESPLIYVSV…QIYVDEAPLP (1053 aa)) the chain is on the extracellular side. Cysteine 35 and cysteine 60 are oxidised to a cystine. 5 N-linked (GlcNAc...) asparagine glycosylation sites follow: asparagine 90, asparagine 100, asparagine 118, asparagine 226, and asparagine 321. A disulfide bond links cysteine 189 and cysteine 302. Cysteine 330 and cysteine 343 are disulfide-bonded. Asparagine 618 and asparagine 690 each carry an N-linked (GlcNAc...) asparagine glycan. Disulfide bonds link cysteine 718/cysteine 816, cysteine 829/cysteine 1037, cysteine 911/cysteine 920, and cysteine 922/cysteine 937. 2 N-linked (GlcNAc...) asparagine glycosylation sites follow: asparagine 913 and asparagine 921. Residues asparagine 1010 and asparagine 1015 are each glycosylated (N-linked (GlcNAc...) asparagine). A helical membrane pass occupies residues 1054-1076 (FPGHTLIAVATAVVLGGLIFIAF). The Cytoplasmic segment spans residues 1077-1116 (MFQLQGIHPWRTFQRWIRRNQEKFSSISLSELIHRSKSEE).

In terms of assembly, component of the CatSper complex or CatSpermasome composed of the core pore-forming members CATSPER1, CATSPER2, CATSPER3 and CATSPER4 as well as auxiliary members CATSPERB, CATSPERG, CATSPERD, CATSPERE, CATSPERZ, C2CD6/CATSPERT, TMEM249, TMEM262 and EFCAB9. HSPA1 may be an additional auxiliary complex member. The core complex members CATSPER1, CATSPER2, CATSPER3 and CATSPER4 form a heterotetrameric channel. The auxiliary CATSPERB, CATSPERG, CATSPERD and CATSPERE subunits form a pavilion-like structure over the pore which stabilizes the complex through interactions with CATSPER4, CATSPER3, CATSPER1 and CATSPER2 respectively. TMEM262/CATSPERH interacts with CATSPERB, further stabilizing the complex. C2CD6/CATSPERT interacts at least with CATSPERD and is required for targeting the CatSper complex in the flagellar membrane.

The protein resides in the cell projection. The protein localises to the cilium. Its subcellular location is the flagellum membrane. Auxiliary component of the CatSper complex, a complex involved in sperm cell hyperactivation. Sperm cell hyperactivation is needed for sperm motility which is essential late in the preparation of sperm for fertilization. The chain is Cation channel sperm-associated auxiliary subunit beta from Homo sapiens (Human).